Consider the following 97-residue polypeptide: uncharacterized protein (97 aa).

The interval 27–50 (IGESEDKTNSRGQPATMKEDEVED) is disordered.

This is an uncharacterized protein from Caldicellulosiruptor saccharolyticus (Caldocellum saccharolyticum).